We begin with the raw amino-acid sequence, 481 residues long: Neuronal acetylcholine receptor subunit eat-2 (481 aa).

Residues methionine 1 to threonine 19 form the signal peptide. Over serine 20–tyrosine 235 the chain is Extracellular. N-linked (GlcNAc...) asparagine glycosylation occurs at asparagine 93. Residues cysteine 147 and cysteine 161 are joined by a disulfide bond. The next 3 helical transmembrane spans lie at glycine 236 to methionine 256, valine 264 to valine 284, and isoleucine 292 to valine 312. Over serine 313–arginine 443 the chain is Cytoplasmic. Residues lysine 356 to serine 384 form a disordered region. Residues alanine 444–cysteine 464 traverse the membrane as a helical segment.

This sequence belongs to the ligand-gated ion channel (TC 1.A.9) family. Acetylcholine receptor (TC 1.A.9.1) subfamily. Neuronal AChR seems to be composed of two different type of subunits: alpha and beta.

The protein resides in the postsynaptic cell membrane. It is found in the cell membrane. Its function is as follows. After binding acetylcholine, the AChR responds by an extensive change in conformation that affects all subunits and leads to opening of an ion-conducting channel across the plasma membrane. Nicotinic acetylcholine receptor in the MC pharyngeal motor neuron involved in pharyngeal pumping. Has a role in the determination of life span possibly via calorific restriction which affects growth rate, although this is independent of metabolic activity. This Caenorhabditis briggsae protein is Neuronal acetylcholine receptor subunit eat-2.